The following is a 97-amino-acid chain: Small ribosomal subunit protein bS20 (97 aa).

This sequence belongs to the bacterial ribosomal protein bS20 family.

Its function is as follows. Binds directly to 16S ribosomal RNA. The polypeptide is Small ribosomal subunit protein bS20 (Prochlorococcus marinus (strain AS9601)).